Reading from the N-terminus, the 346-residue chain is Extracellular protease (346 aa).

The N-terminal stretch at 1-21 (MMKATPIALLLAGVLASPLCA) is a signal peptide. Residue His296 coordinates Zn(2+). Residue Glu297 is part of the active site. Zn(2+) contacts are provided by His300 and Asp309.

It belongs to the peptidase M35 family. It depends on Zn(2+) as a cofactor.

In terms of biological role, heat-labile protease. This is Extracellular protease from Aeromonas hydrophila.